Reading from the N-terminus, the 274-residue chain is 2-dehydro-3-deoxyphosphooctonate aldolase (274 aa).

The protein belongs to the KdsA family.

It is found in the cytoplasm. It catalyses the reaction D-arabinose 5-phosphate + phosphoenolpyruvate + H2O = 3-deoxy-alpha-D-manno-2-octulosonate-8-phosphate + phosphate. The protein operates within carbohydrate biosynthesis; 3-deoxy-D-manno-octulosonate biosynthesis; 3-deoxy-D-manno-octulosonate from D-ribulose 5-phosphate: step 2/3. Its pathway is bacterial outer membrane biogenesis; lipopolysaccharide biosynthesis. This chain is 2-dehydro-3-deoxyphosphooctonate aldolase, found in Rickettsia conorii (strain ATCC VR-613 / Malish 7).